Here is a 1499-residue protein sequence, read N- to C-terminus: DENN domain-containing protein 4B (1499 aa).

The interval Pro-26–Glu-45 is disordered. Pro residues predominate over residues Pro-34–Ala-44. One can recognise an MABP domain in the interval Ala-44–Leu-203. A uDENN domain is found at Val-195–Pro-369. A cDENN domain is found at Pro-390 to Thr-526. The region spanning Leu-528–Ala-644 is the dDENN domain. The tract at residues Pro-717–Gln-744 is disordered. Over residues Pro-729–Pro-739 the composition is skewed to low complexity. 2 PPR repeats span residues Trp-775–Pro-811 and Asp-812–Pro-846. Disordered regions lie at residues Pro-890–Thr-968, Pro-988–Ser-1115, and Arg-1204–Pro-1226. Residues Gln-897 to Gln-915 show a composition bias toward low complexity. The span at Arg-933 to Ala-942 shows a compositional bias: polar residues. Ser-951 carries the post-translational modification Phosphoserine. Residues Ile-1074–Leu-1083 show a composition bias toward pro residues. Ser-1090 carries the post-translational modification Phosphoserine. Positions Gly-1103–Ser-1115 are enriched in low complexity.

Its subcellular location is the golgi apparatus. Functionally, guanine nucleotide exchange factor (GEF) which may activate RAB10. Promotes the exchange of GDP to GTP, converting inactive GDP-bound Rab proteins into their active GTP-bound form. This Mus musculus (Mouse) protein is DENN domain-containing protein 4B (Dennd4b).